Reading from the N-terminus, the 275-residue chain is Anthracycline biosynthesis protein DnrV (275 aa).

2 VOC domains span residues 8-136 (APAW…VWRK) and 150-263 (SVGW…VVEL).

Its pathway is antibiotic biosynthesis; daunorubicin biosynthesis. It functions in the pathway antibiotic biosynthesis; carminomycin biosynthesis. Involved in the biosynthesis of the anthracyclines carminomycin and daunorubicin (daunomycin) which are aromatic polyketide antibiotics that exhibit high cytotoxicity and are widely applied in the chemotherapy of a variety of cancers. In vivo, it acts jointly with DoxA in the conversion of 13-deoxycarminomycin and 13-deoxydaunorubicin to yield carminomycin and daunorubicin, respectively. In vitro, it also acts jointly with DoxA in the C-14 hydroxylation of daunorubicin to form doxorubicin, although this strain is not a doxorubicin producer. This Streptomyces peucetius protein is Anthracycline biosynthesis protein DnrV (dnrV).